A 121-amino-acid chain; its full sequence is MKMVSSSRLRCLLVLLLSLTASISCSFAGQRDSKLRLLLHRYPLQGSKQDMTRSALAELLLSDLLQGENEALEEENFPLAEGGPEDAHADLERAASGGPLLAPRERKAGCKNFFWKTFTSC.

A signal peptide spans 1-24; the sequence is MKMVSSSRLRCLLVLLLSLTASIS. Residues 25-105 constitute a propeptide that is removed on maturation; it reads CSFAGQRDSK…SGGPLLAPRE (81 aa). The tract at residues 76-99 is disordered; it reads NFPLAEGGPEDAHADLERAASGGP. A disulfide bridge connects residues Cys-110 and Cys-121.

This sequence belongs to the somatostatin family.

It is found in the secreted. Its function is as follows. Somatostatin inhibits the release of somatotropin. This chain is Somatostatin-1 (sst1), found in Lophius americanus (American angler).